The following is a 158-amino-acid chain: Regulator of sigma D (158 aa).

The protein belongs to the Rsd/AlgQ family. Interacts with RpoD.

The protein resides in the cytoplasm. Its function is as follows. Binds RpoD and negatively regulates RpoD-mediated transcription activation by preventing the interaction between the primary sigma factor RpoD with the catalytic core of the RNA polymerase and with promoter DNA. May be involved in replacement of the RNA polymerase sigma subunit from RpoD to RpoS during the transition from exponential growth to the stationary phase. This Shigella dysenteriae serotype 1 (strain Sd197) protein is Regulator of sigma D.